Here is a 49-residue protein sequence, read N- to C-terminus: Large ribosomal subunit protein bL33B (49 aa).

This sequence belongs to the bacterial ribosomal protein bL33 family.

The sequence is that of Large ribosomal subunit protein bL33B from Listeria welshimeri serovar 6b (strain ATCC 35897 / DSM 20650 / CCUG 15529 / CIP 8149 / NCTC 11857 / SLCC 5334 / V8).